We begin with the raw amino-acid sequence, 133 residues long: MSSNSVVYWGTGRRKTSVARVRLVPGNGTITINGRPGDNYLNYNPAYIAAVKAPLETLGLSTEYDVLVNVHGGGLTGQSGAIKQGAARALCELSADNRKPLKTEGHLSRDPRAKERRKYGLKKARKAPQFSKR.

Residues R98–A113 are compositionally biased toward basic and acidic residues. Residues R98–R133 are disordered. The segment covering K114–R133 has biased composition (basic residues).

The protein belongs to the universal ribosomal protein uS9 family.

The polypeptide is Small ribosomal subunit protein uS9 (Synechococcus sp. (strain CC9902)).